The following is a 305-amino-acid chain: MTGRNQHNGFQFATAVQPATGAYMSAFGNNSETEYSEEDGEAFELRSRGRERHHRSTSRDRKDDIVYLIREIKEGDTLISISLQYFCTVADIKRANNLLTEQDFFALRSLRIPVRKFSSFTETHNTAPHKSSSPSGTCRITETPVSGASLDSTSSSSSADSVECFLQEKDKDIQQLVKSSAPSRNSLSEVVSSLEQPLLGDAERRPAIKKDPYYGADWGMRWWTAVAIMLVVGIVTPVFYLLYYEVLMKADVSHHTTIDSIRPGPTQPAIAEPLVLPQANAAPHQDSHLLPVIEQQHHVKHQEET.

At 1-221 (MTGRNQHNGF…PYYGADWGMR (221 aa)) the chain is on the extracellular side. A glycan (N-linked (GlcNAc...) asparagine) is linked at asparagine 29. The interval 31-60 (SETEYSEEDGEAFELRSRGRERHHRSTSRD) is disordered. Positions 68–112 (LIREIKEGDTLISISLQYFCTVADIKRANNLLTEQDFFALRSLRI) constitute a LysM domain. A compositionally biased stretch (polar residues) spans 121–144 (TETHNTAPHKSSSPSGTCRITETP). A disordered region spans residues 121 to 156 (TETHNTAPHKSSSPSGTCRITETPVSGASLDSTSSS). Low complexity predominate over residues 146 to 156 (SGASLDSTSSS). Residues 222–242 (WWTAVAIMLVVGIVTPVFYLL) traverse the membrane as a helical segment. Topologically, residues 243–305 (YYEVLMKADV…QHHVKHQEET (63 aa)) are cytoplasmic.

Its subcellular location is the cell membrane. It is found in the golgi apparatus. Essential for Golgi structural integrity. The polypeptide is LysM and putative peptidoglycan-binding domain-containing protein 3 (lysmd3) (Danio rerio (Zebrafish)).